A 1938-amino-acid chain; its full sequence is Myosin heavy chain, striated muscle (1938 aa).

The region spanning 29-79 (DGKKNCWVPDEKEGFASAEIQSSKGDEITVKIVADSSTRTVKKDDIQSMNP) is the Myosin N-terminal SH3-like domain. The Myosin motor domain occupies 83–775 (EKLEDMANMT…VLGNLEEMRD (693 aa)). 176–183 (GESGAGKT) contacts ATP. An actin-binding region spans residues 653–675 (LNKLMKNLYSTHPHFVRCIIPNE). One can recognise an IQ domain in the interval 778–805 (LSKIISMFQAHIRGYLIRKAYKKLQDQR). The segment at 836–1938 (LLSIARQEEE…RSSVSVSASN (1103 aa)) is rodlike tail (S2 and LMM domains). Residues 836–1938 (LLSIARQEEE…RSSVSVSASN (1103 aa)) are a coiled coil. Basic and acidic residues-rich tracts occupy residues 1041-1058 (VRGD…DLKS) and 1212-1225 (SKLE…KREM). Disordered regions lie at residues 1041 to 1062 (VRGD…TQEN), 1187 to 1332 (SALR…EVRN), 1344 to 1363 (LEEE…KANN), and 1898 to 1938 (HELE…SASN). Residues 1265–1285 (RSINELQSQKSRLQAENSDLT) are compositionally biased toward polar residues. Composition is skewed to basic and acidic residues over residues 1286 to 1303 (RQLE…KEKS), 1310 to 1332 (EDAR…EVRN), and 1344 to 1354 (LEEEQESKSDV). Residues 1922–1938 (RSSVSVQRSSVSVSASN) are compositionally biased toward low complexity.

Belongs to the TRAFAC class myosin-kinesin ATPase superfamily. Myosin family. In terms of assembly, muscle myosin is a hexameric protein that consists of 2 heavy chain subunits (MHC), 2 alkali light chain subunits (MLC) and 2 regulatory light chain subunits (MLC-2).

It is found in the cytoplasm. The protein resides in the myofibril. Its function is as follows. Muscle contraction. Functionally, myosin is a protein that binds to F-actin and has ATPase activity that is activated by F-actin. The sequence is that of Myosin heavy chain, striated muscle from Argopecten irradians (Bay scallop).